Reading from the N-terminus, the 443-residue chain is Serine--tRNA ligase (443 aa).

246–248 (TAE) contributes to the L-serine binding site. 277–279 (RAE) contacts ATP. Glutamate 300 contacts L-serine. Residue 367 to 370 (EISS) coordinates ATP. Serine 402 provides a ligand contact to L-serine.

This sequence belongs to the class-II aminoacyl-tRNA synthetase family. Type-1 seryl-tRNA synthetase subfamily. In terms of assembly, homodimer. The tRNA molecule binds across the dimer.

It localises to the cytoplasm. The catalysed reaction is tRNA(Ser) + L-serine + ATP = L-seryl-tRNA(Ser) + AMP + diphosphate + H(+). It carries out the reaction tRNA(Sec) + L-serine + ATP = L-seryl-tRNA(Sec) + AMP + diphosphate + H(+). It functions in the pathway aminoacyl-tRNA biosynthesis; selenocysteinyl-tRNA(Sec) biosynthesis; L-seryl-tRNA(Sec) from L-serine and tRNA(Sec): step 1/1. Catalyzes the attachment of serine to tRNA(Ser). Is also able to aminoacylate tRNA(Sec) with serine, to form the misacylated tRNA L-seryl-tRNA(Sec), which will be further converted into selenocysteinyl-tRNA(Sec). This is Serine--tRNA ligase from Bradyrhizobium diazoefficiens (strain JCM 10833 / BCRC 13528 / IAM 13628 / NBRC 14792 / USDA 110).